A 96-amino-acid chain; its full sequence is Large ribosomal subunit protein uL18m (96 aa).

Belongs to the universal ribosomal protein uL18 family.

It localises to the mitochondrion. The chain is Large ribosomal subunit protein uL18m (RPL18) from Reclinomonas americana.